The primary structure comprises 346 residues: tRNA N6-adenosine threonylcarbamoyltransferase (346 aa).

Residues His110 and His114 each contribute to the Fe cation site. Substrate is bound by residues 132–136, Asp165, Gly178, and Asn274; that span reads LLSGG. Asp298 is a Fe cation binding site.

Belongs to the KAE1 / TsaD family. The cofactor is Fe(2+).

The protein resides in the cytoplasm. The catalysed reaction is L-threonylcarbamoyladenylate + adenosine(37) in tRNA = N(6)-L-threonylcarbamoyladenosine(37) in tRNA + AMP + H(+). Functionally, required for the formation of a threonylcarbamoyl group on adenosine at position 37 (t(6)A37) in tRNAs that read codons beginning with adenine. Is involved in the transfer of the threonylcarbamoyl moiety of threonylcarbamoyl-AMP (TC-AMP) to the N6 group of A37, together with TsaE and TsaB. TsaD likely plays a direct catalytic role in this reaction. The chain is tRNA N6-adenosine threonylcarbamoyltransferase from Borreliella afzelii (strain PKo) (Borrelia afzelii).